A 629-amino-acid chain; its full sequence is Glutamyl-tRNA(Gln) amidotransferase subunit E (629 aa).

Positions 405-426 (PEETRRALPDGNTQYMRPLPGK) are disordered.

Belongs to the GatB/GatE family. GatE subfamily. Heterodimer of GatD and GatE.

The enzyme catalyses L-glutamyl-tRNA(Gln) + L-glutamine + ATP + H2O = L-glutaminyl-tRNA(Gln) + L-glutamate + ADP + phosphate + H(+). In terms of biological role, allows the formation of correctly charged Gln-tRNA(Gln) through the transamidation of misacylated Glu-tRNA(Gln) in organisms which lack glutaminyl-tRNA synthetase. The reaction takes place in the presence of glutamine and ATP through an activated gamma-phospho-Glu-tRNA(Gln). The GatDE system is specific for glutamate and does not act on aspartate. This Thermococcus sibiricus (strain DSM 12597 / MM 739) protein is Glutamyl-tRNA(Gln) amidotransferase subunit E.